The primary structure comprises 336 residues: Phosphonate dehydrogenase (336 aa).

NAD(+) is bound by residues 155-156 (AI), Glu175, 235-237 (PCR), and Asp261. Arg237 is a catalytic residue. Glu266 is an active-site residue. The active-site Proton donor is the His292. 292 to 295 (HIGS) is a binding site for NAD(+).

Homodimer.

It catalyses the reaction phosphonate + NAD(+) + H2O = phosphate + NADH + H(+). Inhibited by NaCl, NADH and sulfite. In terms of biological role, catalyzes phosphite (phosphonate) oxidation. In Stutzerimonas stutzeri (Pseudomonas stutzeri), this protein is Phosphonate dehydrogenase (ptxD).